Reading from the N-terminus, the 522-residue chain is Glucose-6-phosphate 1-dehydrogenase (522 aa).

NADP(+)-binding positions include 40 to 47 (GASGDLAK), Arg74, and Lys177. D-glucose 6-phosphate is bound by residues Lys177, 207–211 (HYLGK), Glu245, and Asp264. Residue His269 is the Proton acceptor of the active site. Arg364 is a binding site for NADP(+). D-glucose 6-phosphate is bound by residues Lys367 and Lys372. Lys373, Arg377, and Arg401 together coordinate NADP(+). Gln403 is a D-glucose 6-phosphate binding site. Residues 409–411 (YMK), 429–431 (DLT), Arg495, and Trp517 each bind NADP(+).

It belongs to the glucose-6-phosphate dehydrogenase family.

It is found in the cytoplasm. Its subcellular location is the cytosol. It catalyses the reaction D-glucose 6-phosphate + NADP(+) = 6-phospho-D-glucono-1,5-lactone + NADPH + H(+). It functions in the pathway carbohydrate degradation; pentose phosphate pathway; D-ribulose 5-phosphate from D-glucose 6-phosphate (oxidative stage): step 1/3. In terms of biological role, cytosolic glucose-6-phosphate dehydrogenase that catalyzes the first and rate-limiting step of the oxidative branch within the pentose phosphate pathway/shunt, an alternative route to glycolysis for the dissimilation of carbohydrates and a major source of reducing power and metabolic intermediates for fatty acid and nucleic acid biosynthetic processes. This is Glucose-6-phosphate 1-dehydrogenase (gspd-1) from Caenorhabditis elegans.